Consider the following 388-residue polypeptide: Xylose isomerase (388 aa).

Catalysis depends on residues histidine 54 and aspartate 57. Positions 181, 217, 220, 245, 255, 257, and 287 each coordinate Mg(2+).

It belongs to the xylose isomerase family. In terms of assembly, homotetramer. It depends on Mg(2+) as a cofactor.

It is found in the cytoplasm. The enzyme catalyses alpha-D-xylose = alpha-D-xylulofuranose. Its function is as follows. Involved in D-xylose catabolism. The polypeptide is Xylose isomerase (xylA) (Streptomyces rubiginosus).